A 657-amino-acid chain; its full sequence is C4-dicarboxylate transport sensor protein DctS (657 aa).

At 1–26 the chain is on the cytoplasmic side; sequence MRDTTGGPAGAEVWTVPGLLGARKLD. A helical transmembrane segment spans residues 27–51; it reads LLALIPLVAIVALMTLVGALLFAVA. Residues 52–252 are Periplasmic-facing; sequence QSDANRARAK…AYDAPDAFGN (201 aa). The chain crosses the membrane as a helical span at residues 253–273; sequence AALLAAIGALSVFAVLAMVVL. Over 274–657 the chain is Cytoplasmic; that stretch reads HRNALRRRMA…LPVPQEGAPA (384 aa). The PAS domain maps to 289–361; the sequence is AEMAFRRAME…ARQRQLIEGQ (73 aa). In terms of domain architecture, PAC spans 365 to 417; it reads QAFETRFRRSDGSEIEVQVFEAPLIDAGGRHRGWMGSVIDITQAKQAARLARA. The tract at residues 407–422 is inter-domain linker; it reads QAKQAARLARAQDESL. A Histidine kinase domain is found at 437–652; the sequence is TLAHELNQPL…VFTVTLPVPQ (216 aa). Histidine 440 carries the phosphohistidine; by autocatalysis modification.

It localises to the cell inner membrane. The catalysed reaction is ATP + protein L-histidine = ADP + protein N-phospho-L-histidine.. Member of the two-component regulatory system DctS/DctR involved in the transport of C4-dicarboxylates. DctS functions as a membrane-associated protein kinase that phosphorylates DctR in response to environmental signals. The sequence is that of C4-dicarboxylate transport sensor protein DctS (dctS) from Rhodobacter capsulatus (Rhodopseudomonas capsulata).